A 187-amino-acid chain; its full sequence is Corticoliberin (187 aa).

The signal sequence occupies residues 1–24 (MRLRLLVSAGMLLVALSPCLPCRA). A propeptide spanning residues 25–144 (LLSRGSVSGA…HQGALERERR (120 aa)) is cleaved from the precursor. Residues 75–95 (AARLSPNSTPLTAGRGSRPSH) form a disordered region. An Isoleucine amide modification is found at Ile185.

It belongs to the sauvagine/corticotropin-releasing factor/urotensin I family. Interacts (via C-terminus) with CRFR1 (via N-terminal extracellular domain). Produced by the hypothalamus.

It localises to the secreted. Its function is as follows. Hormone regulating the release of corticotropin from pituitary gland. Induces NLRP6 in intestinal epithelial cells, hence may influence gut microbiota profile. The polypeptide is Corticoliberin (Crh) (Rattus norvegicus (Rat)).